We begin with the raw amino-acid sequence, 484 residues long: Cobyric acid synthase (484 aa).

Residues 251-438 (ALKVAVPVLS…LHGLFGSDAY (188 aa)) form the GATase cobBQ-type domain. The active-site Nucleophile is the Cys-333. Residue His-430 is part of the active site.

Belongs to the CobB/CobQ family. CobQ subfamily.

It functions in the pathway cofactor biosynthesis; adenosylcobalamin biosynthesis. Its function is as follows. Catalyzes amidations at positions B, D, E, and G on adenosylcobyrinic A,C-diamide. NH(2) groups are provided by glutamine, and one molecule of ATP is hydrogenolyzed for each amidation. This chain is Cobyric acid synthase, found in Sinorhizobium fredii (strain NBRC 101917 / NGR234).